A 179-amino-acid chain; its full sequence is Signal peptidase complex subunit 3 (179 aa).

Residues 1–12 (MHTVLTRGNATV) lie on the Cytoplasmic side of the membrane. The chain crosses the membrane as a helical; Signal-anchor for type II membrane protein span at residues 13–33 (AYTLSVLACLTFSCFLSTVFL). The Lumenal portion of the chain corresponds to 34–179 (DYRTDANINT…FPADYATSSI (146 aa)). Asn-73 and Asn-141 each carry an N-linked (GlcNAc...) asparagine glycan.

The protein belongs to the SPCS3 family. In terms of assembly, component of the signal peptidase complex (SPC) composed of a catalytic subunit twr/SEC11 and three accessory subunits Spase12/SPCS1, Spase25/SPCS2 and Spase22-23/SPCS3. The complex induces a local thinning of the ER membrane which is used to measure the length of the signal peptide (SP) h-region of protein substrates. This ensures the selectivity of the complex towards h-regions shorter than 18-20 amino acids.

Its subcellular location is the endoplasmic reticulum membrane. Essential component of the signal peptidase complex (SPC) which catalyzes the cleavage of N-terminal signal sequences from nascent proteins as they are translocated into the lumen of the endoplasmic reticulum. Essential for the SPC catalytic activity, possibly by stabilizing and positioning the active center of the complex close to the lumenal surface. Functionally, (Microbial infection) Plays an important role in infection by flaviviruses such as West Nile virus and Dengue virus type 2. The chain is Signal peptidase complex subunit 3 (Spase22-23) from Drosophila melanogaster (Fruit fly).